We begin with the raw amino-acid sequence, 282 residues long: Phosphoglucan phosphatase LSF2, chloroplastic (282 aa).

Residues 1-61 constitute a chloroplast transit peptide; sequence MSVIGSKSCI…GENPGTNGVS (61 aa). Substrate-binding positions include tyrosine 83, 153 to 156, aspartate 161, and 177 to 180; these read RHMR and SLEW. The region spanning 92 to 249 is the Tyrosine-protein phosphatase domain; the sequence is NYTLIRDELI…TYDLAKNDPW (158 aa). Cysteine 193 functions as the Phosphocysteine intermediate in the catalytic mechanism. The Glucan phosphatase signature motif CXAGXGR motif lies at 193–199; it reads CSAGLGR. Residues 194 to 199, glycine 230, lysine 245, glutamate 251, 259 to 263, and glutamate 268 contribute to the substrate site; these read SAGLGR and NAFED.

As to expression, widely expressed.

The protein localises to the plastid. The protein resides in the chloroplast. Starch-associated phosphoglucan phosphatase that selectively dephosphorylates the glucan C3 position. Probably participates in the regulation of starch degradation. In Arabidopsis thaliana (Mouse-ear cress), this protein is Phosphoglucan phosphatase LSF2, chloroplastic (LSF2).